The sequence spans 330 residues: Inorganic pyrophosphatase 2, mitochondrial (330 aa).

Residues 1–27 (MRALLPLLSVGRGWRVGAAARPPRRVM) constitute a mitochondrion transit peptide. Asp159, Asp164, and Asp196 together coordinate Mg(2+). Position 211 is an N6-succinyllysine (Lys211). Lys219 carries the post-translational modification N6-acetyllysine. At Lys254 the chain carries N6-succinyllysine. Position 256 is an N6-acetyllysine (Lys256).

This sequence belongs to the PPase family. Homodimer. The cofactor is Mg(2+).

Its subcellular location is the mitochondrion. It carries out the reaction diphosphate + H2O = 2 phosphate + H(+). Hydrolyzes inorganic pyrophosphate. This activity is essential for correct regulation of mitochondrial membrane potential, and mitochondrial organization and function. This chain is Inorganic pyrophosphatase 2, mitochondrial (Ppa2), found in Mus musculus (Mouse).